Consider the following 247-residue polypeptide: V-type proton ATPase subunit D (247 aa).

This sequence belongs to the V-ATPase D subunit family. In terms of assembly, V-ATPase is a heteromultimeric enzyme made up of two complexes: the ATP-hydrolytic V1 complex and the proton translocation V0 complex. The V1 complex consists of three catalytic AB heterodimers that form a heterohexamer, three peripheral stalks each consisting of EG heterodimers, one central rotor including subunits D and F, and the regulatory subunits C and H. The proton translocation complex V0 consists of the proton transport subunit a, a ring of proteolipid subunits c9c'', rotary subunit d, subunits e and f, and the accessory subunits ATP6AP1/Ac45 and ATP6AP2/PRR. Interacts with SNX10.

It is found in the membrane. Its subcellular location is the cytoplasmic vesicle. The protein localises to the clathrin-coated vesicle membrane. The protein resides in the cytoplasm. It localises to the cytoskeleton. It is found in the microtubule organizing center. Its subcellular location is the centrosome. The protein localises to the cell projection. The protein resides in the cilium. Functionally, subunit of the V1 complex of vacuolar(H+)-ATPase (V-ATPase), a multisubunit enzyme composed of a peripheral complex (V1) that hydrolyzes ATP and a membrane integral complex (V0) that translocates protons. V-ATPase is responsible for acidifying and maintaining the pH of intracellular compartments and in some cell types, is targeted to the plasma membrane, where it is responsible for acidifying the extracellular environment. May play a role in cilium biogenesis through regulation of the transport and the localization of proteins to the cilium. This chain is V-type proton ATPase subunit D (ATP6V1D), found in Oryctolagus cuniculus (Rabbit).